Here is a 427-residue protein sequence, read N- to C-terminus: UPF0229 protein YeaH (427 aa).

Residues 79-90 show a composition bias toward basic and acidic residues; sequence NDHFVQNDRIER. A disordered region spans residues 79 to 110; the sequence is NDHFVQNDRIERPQGGGGGSGSGQGQASQDGE. Residues 92 to 102 show a composition bias toward gly residues; sequence QGGGGGSGSGQ.

Belongs to the UPF0229 family.

This Escherichia coli (strain K12 / MC4100 / BW2952) protein is UPF0229 protein YeaH.